Consider the following 668-residue polypeptide: Protein-glutamine gamma-glutamyltransferase (668 aa).

Residues 1–6 (MNAIPR) are Cytoplasmic-facing. Residues 7–27 (VALVWLLVAQVLVILPHLAYM) form a helical membrane-spanning segment. Topologically, residues 28-50 (PLWIAAMWLGCAAWRVQVFRMRA) are periplasmic. Residues 51-71 (GYPRAWVKLALALLAGAGVWL) form a helical membrane-spanning segment. Residues 72–74 (SRG) lie on the Cytoplasmic side of the membrane. Residues 75–95 (SLVGLDAGAVLLIAAFILKLV) traverse the membrane as a helical segment. Topologically, residues 96-103 (EMKTRRDA) are periplasmic. Helical transmembrane passes span 104–124 (LVLV…DDGF) and 125–145 (LAAL…IGLQ). The Cytoplasmic segment spans residues 146–158 (QSAFASRPWPTLR). The helical transmembrane segment at 159-179 (LAGGLLLQALPLMLLLFLFFP) threads the bilayer. Residues 180–548 (RLGPLWSLPM…FGGLDPTRLG (369 aa)) lie on the Periplasmic side of the membrane. Cys-404 serves as the catalytic Nucleophile. Catalysis depends on residues His-448 and Asp-464. The chain crosses the membrane as a helical span at residues 549–569 (LLLGAAAILSVGLLALFLLKP). Residues 570–668 (WQGRGDLRSR…TRDGRGEEQA (99 aa)) lie on the Cytoplasmic side of the membrane.

Belongs to the transglutaminase-like superfamily.

It is found in the cell inner membrane. The enzyme catalyses L-glutaminyl-[protein] + L-lysyl-[protein] = [protein]-L-lysyl-N(6)-5-L-glutamyl-[protein] + NH4(+). Displays transglutaminase activity (TGase) in vitro. Plays a critical role in the viability of P.aeruginosa. Might contribute to an essential function linked to the cell wall. The chain is Protein-glutamine gamma-glutamyltransferase (tgpA) from Pseudomonas aeruginosa (strain ATCC 15692 / DSM 22644 / CIP 104116 / JCM 14847 / LMG 12228 / 1C / PRS 101 / PAO1).